Here is a 227-residue protein sequence, read N- to C-terminus: Cytochrome c oxidase subunit 2 (227 aa).

Residues 1–14 (MAYPLQMGLQDATS) lie on the Mitochondrial intermembrane side of the membrane. The chain crosses the membrane as a helical span at residues 15–45 (PIMEELLHFHDHTLMIVFLISSLVLYIISLM). The Mitochondrial matrix segment spans residues 46–59 (LTTKLTHTSTMDAQ). Residues 60 to 87 (EVETVWTILPAIILILIALPSLRILYMM) form a helical membrane-spanning segment. Topologically, residues 88–227 (DEINNPSLTV…HFEKWSTSML (140 aa)) are mitochondrial intermembrane. Positions 161, 196, 198, 200, 204, and 207 each coordinate Cu cation. E198 contacts Mg(2+).

The protein belongs to the cytochrome c oxidase subunit 2 family. In terms of assembly, component of the cytochrome c oxidase (complex IV, CIV), a multisubunit enzyme composed of 14 subunits. The complex is composed of a catalytic core of 3 subunits MT-CO1, MT-CO2 and MT-CO3, encoded in the mitochondrial DNA, and 11 supernumerary subunits COX4I, COX5A, COX5B, COX6A, COX6B, COX6C, COX7A, COX7B, COX7C, COX8 and NDUFA4, which are encoded in the nuclear genome. The complex exists as a monomer or a dimer and forms supercomplexes (SCs) in the inner mitochondrial membrane with NADH-ubiquinone oxidoreductase (complex I, CI) and ubiquinol-cytochrome c oxidoreductase (cytochrome b-c1 complex, complex III, CIII), resulting in different assemblies (supercomplex SCI(1)III(2)IV(1) and megacomplex MCI(2)III(2)IV(2)). Found in a complex with TMEM177, COA6, COX18, COX20, SCO1 and SCO2. Interacts with TMEM177 in a COX20-dependent manner. Interacts with COX20. Interacts with COX16. The cofactor is Cu cation.

The protein localises to the mitochondrion inner membrane. The enzyme catalyses 4 Fe(II)-[cytochrome c] + O2 + 8 H(+)(in) = 4 Fe(III)-[cytochrome c] + 2 H2O + 4 H(+)(out). Its function is as follows. Component of the cytochrome c oxidase, the last enzyme in the mitochondrial electron transport chain which drives oxidative phosphorylation. The respiratory chain contains 3 multisubunit complexes succinate dehydrogenase (complex II, CII), ubiquinol-cytochrome c oxidoreductase (cytochrome b-c1 complex, complex III, CIII) and cytochrome c oxidase (complex IV, CIV), that cooperate to transfer electrons derived from NADH and succinate to molecular oxygen, creating an electrochemical gradient over the inner membrane that drives transmembrane transport and the ATP synthase. Cytochrome c oxidase is the component of the respiratory chain that catalyzes the reduction of oxygen to water. Electrons originating from reduced cytochrome c in the intermembrane space (IMS) are transferred via the dinuclear copper A center (CU(A)) of subunit 2 and heme A of subunit 1 to the active site in subunit 1, a binuclear center (BNC) formed by heme A3 and copper B (CU(B)). The BNC reduces molecular oxygen to 2 water molecules using 4 electrons from cytochrome c in the IMS and 4 protons from the mitochondrial matrix. This chain is Cytochrome c oxidase subunit 2 (MT-CO2), found in Halichoerus grypus (Gray seal).